The sequence spans 393 residues: Acetylornithine aminotransferase (393 aa).

Residues 102–103 (GA) and Phe-136 contribute to the pyridoxal 5'-phosphate site. Residue Arg-139 coordinates N(2)-acetyl-L-ornithine. 219–222 (DEVQ) provides a ligand contact to pyridoxal 5'-phosphate. Lys-248 bears the N6-(pyridoxal phosphate)lysine mark. Ser-274 is a N(2)-acetyl-L-ornithine binding site. Thr-275 lines the pyridoxal 5'-phosphate pocket.

This sequence belongs to the class-III pyridoxal-phosphate-dependent aminotransferase family. ArgD subfamily. Homodimer. It depends on pyridoxal 5'-phosphate as a cofactor.

It localises to the cytoplasm. The enzyme catalyses N(2)-acetyl-L-ornithine + 2-oxoglutarate = N-acetyl-L-glutamate 5-semialdehyde + L-glutamate. It functions in the pathway amino-acid biosynthesis; L-arginine biosynthesis; N(2)-acetyl-L-ornithine from L-glutamate: step 4/4. This Wolinella succinogenes (strain ATCC 29543 / DSM 1740 / CCUG 13145 / JCM 31913 / LMG 7466 / NCTC 11488 / FDC 602W) (Vibrio succinogenes) protein is Acetylornithine aminotransferase.